A 415-amino-acid chain; its full sequence is uncharacterized protein (415 aa).

This is an uncharacterized protein from Methanocaldococcus jannaschii (strain ATCC 43067 / DSM 2661 / JAL-1 / JCM 10045 / NBRC 100440) (Methanococcus jannaschii).